The primary structure comprises 317 residues: tRNA dimethylallyltransferase (317 aa).

ATP is bound at residue 14-21 (GPTAVGKT). A substrate-binding site is contributed by 16–21 (TAVGKT). The segment at 39–42 (DSMQ) is interaction with substrate tRNA.

Belongs to the IPP transferase family. As to quaternary structure, monomer. Mg(2+) is required as a cofactor.

It carries out the reaction adenosine(37) in tRNA + dimethylallyl diphosphate = N(6)-dimethylallyladenosine(37) in tRNA + diphosphate. Its function is as follows. Catalyzes the transfer of a dimethylallyl group onto the adenine at position 37 in tRNAs that read codons beginning with uridine, leading to the formation of N6-(dimethylallyl)adenosine (i(6)A). The chain is tRNA dimethylallyltransferase from Bacillus cereus (strain G9842).